The chain runs to 1544 residues: Zinc finger protein GLI2 (1544 aa).

The tract at residues 1–26 is disordered; sequence METSAPAPALEKKEAKSGLLEDSSFP. A phosphoserine mark is found at S145, S230, S232, and S238. A disordered region spans residues 338-364; sequence SSSSSNCLNDANQNKQNSESAVSSTVN. S385 carries the phosphoserine; by DYRK2 modification. Residues 417-444 form a C2H2-type 1 zinc finger; that stretch reads TNCHWADCTKEYDTQEQLVHHINNEHIH. The segment at 455–477 adopts a C2H2-type 2; degenerate zinc-finger fold; it reads QACTREQKPFKAQYMLVVHMRRH. C2H2-type zinc fingers lie at residues 483-507, 513-538, and 544-569; these read HKCT…LRSH, YVCE…NRTH, and YICK…KTVH. Disordered stretches follow at residues 557–619 and 635–682; these read DPSS…TSHT and GLCQ…ALAD. The segment covering 569-585 has biased composition (basic and acidic residues); it reads HGPDAHVTKKQRNDVHV. Over residues 637–657 the composition is skewed to low complexity; that stretch reads CQSSPGAQSSCSSEPSPLGSA. Phosphoserine is present on S707. A Phosphothreonine modification is found at T708. Position 740 is an N6-acetyllysine; by EP300 (K740). Disordered regions lie at residues 781–800, 805–861, 908–963, 995–1016, 1166–1220, and 1422–1457; these read SQLQ…AYTV, SGIS…PGLL, ALPG…RRPD, VQSH…RPPS, FGQY…CLGM, and GGCP…VSST. Composition is skewed to polar residues over residues 790 to 800 and 805 to 814; these read STSTMSSAYTV and SGISPYFSSR. The span at 954–963 shows a compositional bias: basic and acidic residues; sequence RASDPVRRPD. Phosphoserine; by DYRK2 is present on S997. Composition is skewed to polar residues over residues 997–1009, 1173–1190, and 1200–1209; these read SHPS…TRNA, NPQS…TQPH, and SRGSYTQQPR.

Belongs to the GLI C2H2-type zinc-finger protein family. As to quaternary structure, interacts with ZIC1 and ZIC2. Interacts with STK36. Interacts with SUFU; this inhibits transcriptional activation mediated by GLI2. Interacts (via C-terminal internal region) with FOXC1 (via N-terminus); this interaction is direct and increases GLI2 DNA-binding and transcriptional activity through a smoothened (SMO)-independent Hedgehog (Hh) signaling pathway. In terms of processing, phosphorylated in vitro by ULK3. Phosphorylated by DYRK2; this inhibits GLI2 transcription factor activity and promotes proteasomal degradation of GLI2. Acetylation at Lys-740 inhibits Hh target gene expression, probably by impeding entry into chromatin thus preventing promoter occupancy.

It localises to the nucleus. Its subcellular location is the cytoplasm. The protein resides in the cell projection. The protein localises to the cilium. In terms of biological role, functions as a transcription regulator in the hedgehog (Hh) pathway. Functions as a transcriptional activator. May also function as transcriptional repressor. Requires STK36 for full transcriptional activator activity. Binds to the DNA sequence 5'-GAACCACCCA-3' which is part of the TRE-2S regulatory element. Is involved in the smoothened (SHH) signaling pathway. Required for normal skeleton development. This chain is Zinc finger protein GLI2, found in Mus musculus (Mouse).